A 111-amino-acid polypeptide reads, in one-letter code: Large ribosomal subunit protein uL22 (111 aa).

It belongs to the universal ribosomal protein uL22 family. As to quaternary structure, part of the 50S ribosomal subunit.

This protein binds specifically to 23S rRNA; its binding is stimulated by other ribosomal proteins, e.g. L4, L17, and L20. It is important during the early stages of 50S assembly. It makes multiple contacts with different domains of the 23S rRNA in the assembled 50S subunit and ribosome. Its function is as follows. The globular domain of the protein is located near the polypeptide exit tunnel on the outside of the subunit, while an extended beta-hairpin is found that lines the wall of the exit tunnel in the center of the 70S ribosome. The protein is Large ribosomal subunit protein uL22 of Polynucleobacter necessarius subsp. necessarius (strain STIR1).